Reading from the N-terminus, the 282-residue chain is Gap junction Cx32.7 protein (282 aa).

Topologically, residues 2 to 13 are cytoplasmic; that stretch reads GEWDLLGRLLDK. The chain crosses the membrane as a helical span at residues 14–36; sequence VQSHSTVIGKVWLTVLFVFRILV. Over 37-76 the chain is Extracellular; that stretch reads LRTGADRVWGDEQSDFVCNTQQPGCENVCYDLAFPISHVR. A helical membrane pass occupies residues 77-99; sequence FWFLQIIAVATPKLLYLGHVLHV. At 100-148 the chain is on the cytoplasmic side; that stretch reads IHAEKKMKERMKKQAELDDQTNLFLRKAYKVPKYTKSSGKISIRGRLLR. The chain crosses the membrane as a helical span at residues 149–171; that stretch reads SYVYHLVAKIILEVLFIVGQYFL. The Extracellular portion of the chain corresponds to 172-203; it reads YGFTLDTRYVCTRFPCPHKVDCFLSRPTEKSV. Residues 204 to 226 form a helical membrane-spanning segment; sequence IIWFMLVAAFVSLFLSLVELFYL. The Cytoplasmic portion of the chain corresponds to 227–282; sequence CVKAAKECMARRQDYTVTPVTPPLLARKSFKSHKEVFQNCVNEPASPENNMEEVHI.

This sequence belongs to the connexin family. Alpha-type (group II) subfamily. A connexon is composed of a hexamer of connexins. As to expression, expressed equally in incompetent and competent ovaries.

It localises to the cell membrane. It is found in the cell junction. Its subcellular location is the gap junction. Functionally, one gap junction consists of a cluster of closely packed pairs of transmembrane channels, the connexons, through which materials of low MW diffuse from one cell to a neighboring cell. The polypeptide is Gap junction Cx32.7 protein (Micropogonias undulatus (Atlantic croaker)).